A 588-amino-acid polypeptide reads, in one-letter code: UvrABC system protein C (588 aa).

One can recognise a GIY-YIG domain in the interval 12–89; the sequence is SKPGCYLYLN…IKKYRPKYNV (78 aa). In terms of domain architecture, UVR spans 194–229; sequence NEVKTLLTNQMHKAAENLQFEEAQRIKEQIISLDFT.

Belongs to the UvrC family. As to quaternary structure, interacts with UvrB in an incision complex.

It localises to the cytoplasm. In terms of biological role, the UvrABC repair system catalyzes the recognition and processing of DNA lesions. UvrC both incises the 5' and 3' sides of the lesion. The N-terminal half is responsible for the 3' incision and the C-terminal half is responsible for the 5' incision. This chain is UvrABC system protein C, found in Mesoplasma florum (strain ATCC 33453 / NBRC 100688 / NCTC 11704 / L1) (Acholeplasma florum).